A 413-amino-acid chain; its full sequence is Aminopeptidase PepS (413 aa).

Glu253, Glu319, Glu343, His348, His381, and Asp383 together coordinate a divalent metal cation.

The protein belongs to the peptidase M29 family. As to quaternary structure, monomer. Co(2+) is required as a cofactor. Zn(2+) serves as cofactor. It depends on Mg(2+) as a cofactor.

Its function is as follows. Exhibits a high specificity towards peptides possessing arginine or aromatic amino acids at the N-terminus. Could be involved both in bacterial growth by supplying amino acids. This Streptococcus thermophilus protein is Aminopeptidase PepS (pepS).